The chain runs to 486 residues: MKTLTQLHFDNRFARLGDTFSTQVSPQPLEAPRLVVASEAAMALLDLDPAEAEQALFAELFSGHKIWSTAEPRAMVYSGHQFGSYNPQLGDGRGLLLGEVVNEAGEYWDLHLKGAGKTPYSRMGDGRAVLRSSIREFLASEHLHALGIPSSRALCVTGSDTLVYRERPERGAMLLRLAPSHVRFGHFEFFYYTRQHGELKQLLEHVIEVHFPELLEHPEPFHMFFRTVLERTAALIARWQAYGFCHGVMNTDNMSILGITFDFGPYAFLDDFDARFICNHSDDTGRYSFENQVPIAHWNLAALAQALTPFVEVKVLRETMELFLPLYEAEWLDLMRRRLGFSQAEDGDAELIRRLLQLMQGSAVDYTRFFRELGERPAEQAVQRLREDFIDLQGFDAWAADYCARSAREGGDPVARQARMHAVNPKYILRNYLAQQAIEAAEKGDYAPVRELHAVLSRPFDEQPGMERYAERPPEWGKHLEISCSS.

The ATP site is built by G90, G92, R93, K113, D125, G126, R176, and R183. Residue D252 is the Proton acceptor of the active site. Mg(2+)-binding residues include N253 and D262. D262 lines the ATP pocket.

Belongs to the SELO family. Requires Mg(2+) as cofactor. The cofactor is Mn(2+).

It carries out the reaction L-seryl-[protein] + ATP = 3-O-(5'-adenylyl)-L-seryl-[protein] + diphosphate. The catalysed reaction is L-threonyl-[protein] + ATP = 3-O-(5'-adenylyl)-L-threonyl-[protein] + diphosphate. The enzyme catalyses L-tyrosyl-[protein] + ATP = O-(5'-adenylyl)-L-tyrosyl-[protein] + diphosphate. It catalyses the reaction L-histidyl-[protein] + UTP = N(tele)-(5'-uridylyl)-L-histidyl-[protein] + diphosphate. It carries out the reaction L-seryl-[protein] + UTP = O-(5'-uridylyl)-L-seryl-[protein] + diphosphate. The catalysed reaction is L-tyrosyl-[protein] + UTP = O-(5'-uridylyl)-L-tyrosyl-[protein] + diphosphate. Functionally, nucleotidyltransferase involved in the post-translational modification of proteins. It can catalyze the addition of adenosine monophosphate (AMP) or uridine monophosphate (UMP) to a protein, resulting in modifications known as AMPylation and UMPylation. The sequence is that of Protein nucleotidyltransferase YdiU from Stutzerimonas stutzeri (strain A1501) (Pseudomonas stutzeri).